A 124-amino-acid polypeptide reads, in one-letter code: Protein ApaG (124 aa).

The region spanning 1-124 is the ApaG domain; sequence MSRYELTVQV…FALAMPRMLH (124 aa).

The sequence is that of Protein ApaG from Ralstonia nicotianae (strain ATCC BAA-1114 / GMI1000) (Ralstonia solanacearum).